A 150-amino-acid chain; its full sequence is Large ribosomal subunit protein bL9 (150 aa).

This sequence belongs to the bacterial ribosomal protein bL9 family.

Its function is as follows. Binds to the 23S rRNA. In Buchnera aphidicola subsp. Schizaphis graminum (strain Sg), this protein is Large ribosomal subunit protein bL9.